Consider the following 109-residue polypeptide: Small ribosomal subunit protein eS25 (109 aa).

Positions 1–36 (MGGASKKPISTVEKRMKKMAEEQQKKQQKRATTKTG) are disordered. The segment covering 12 to 25 (VEKRMKKMAEEQQK) has biased composition (basic and acidic residues).

This sequence belongs to the eukaryotic ribosomal protein eS25 family.

The sequence is that of Small ribosomal subunit protein eS25 (rps25e) from Sulfurisphaera tokodaii (strain DSM 16993 / JCM 10545 / NBRC 100140 / 7) (Sulfolobus tokodaii).